The sequence spans 122 residues: Probable DNA-directed RNA polymerase II subunit RPB11 (122 aa).

It belongs to the archaeal Rpo11/eukaryotic RPB11/RPC19 RNA polymerase subunit family. As to quaternary structure, component of the RNA polymerase II (Pol II) complex consisting of 12 subunits.

Its subcellular location is the nucleus. In terms of biological role, DNA-dependent RNA polymerase catalyzes the transcription of DNA into RNA using the four ribonucleoside triphosphates as substrates. Component of RNA polymerase II which synthesizes mRNA precursors and many functional non-coding RNAs. Pol II is the central component of the basal RNA polymerase II transcription machinery. It is composed of mobile elements that move relative to each other. RPB11 is part of the core element with the central large cleft. The sequence is that of Probable DNA-directed RNA polymerase II subunit RPB11 (rpb-11) from Caenorhabditis briggsae.